The following is a 436-amino-acid chain: Acetylcholine receptor non-alpha chain (436 aa).

Over 1–195 the chain is Extracellular; sequence IIDVHEIDQI…IFYLELRRKP (195 aa). Residue Asn-62 is glycosylated (N-linked (GlcNAc...) asparagine). Cys-89 and Cys-103 are oxidised to a cystine. Residue Asn-140 is glycosylated (N-linked (GlcNAc...) asparagine). Helical transmembrane passes span 196 to 219, 227 to 245, and 261 to 280; these read LFYTVNLVFPCVGISFLTIVAFYL, VTLCILILVALTVFYLLLK, and YLLFTMIMVSLSVLVTVISL. Over 281–404 the chain is Cytoplasmic; the sequence is NLHFRRPSTH…WKFVARVLDR (124 aa). A helical transmembrane segment spans residues 405–423; sequence LFLLLFSIACFLGTILILF.

Belongs to the ligand-gated ion channel (TC 1.A.9) family. Acetylcholine receptor (TC 1.A.9.1) subfamily.

Its subcellular location is the postsynaptic cell membrane. The protein resides in the cell membrane. Its function is as follows. After binding acetylcholine, the AChR responds by an extensive change in conformation that affects all subunits and leads to opening of an ion-conducting channel across the plasma membrane. The polypeptide is Acetylcholine receptor non-alpha chain (Onchocerca volvulus).